Here is an 849-residue protein sequence, read N- to C-terminus: Envelope glycoprotein gp160 (849 aa).

The first 31 residues, 1–31 (MRVKGIQRNWQHLWKWGTLILGLVIICSASD), serve as a signal peptide directing secretion. Residues 32 to 670 (NLWVTVYYGV…ISNWLWYIRI (639 aa)) lie on the Extracellular side of the membrane. Residues Cys-53 and Cys-73 are joined by a disulfide bond. N-linked (GlcNAc...) asparagine; by host glycans are attached at residues Asn-87, Asn-129, Asn-137, Asn-142, Asn-153, Asn-185, Asn-195, Asn-232, Asn-239, Asn-260, Asn-274, Asn-287, Asn-299, Asn-329, Asn-341, Asn-354, and Asn-358. 5 cysteine pairs are disulfide-bonded: Cys-118–Cys-203, Cys-125–Cys-194, Cys-130–Cys-154, Cys-216–Cys-245, and Cys-226–Cys-237. A V1 region spans residues 130-153 (CTNVNSANHTEANNTVENKEEIKN). Positions 154-194 (CSFKITTERGGKKKEEYALFYKLDVVPISNGNKTSYRLIHC) are V2. A V3 region spans residues 294–327 (CIRPNNNTRKSIPIGPGQAFYATGDIIGDIRQAH). An intrachain disulfide couples Cys-294 to Cys-328. Residues 360–370 (SAGGDLEITTH) form a CD4-binding loop region. Intrachain disulfides connect Cys-374/Cys-430 and Cys-381/Cys-403. The interval 381 to 403 (CNTSGLFNNNISNINNETITLPC) is V4. 5 N-linked (GlcNAc...) asparagine; by host glycosylation sites follow: Asn-382, Asn-390, Asn-396, Asn-433, and Asn-447. 2 V5 regions span residues 446-457 (NNDSTEETFRPG) and 448-457 (DSTEETFRPG). The tract at residues 498 to 518 (AVGLGAVFLGFLGAAGSTMGA) is fusion peptide. The tract at residues 560–578 (KQLQSRVLAIERYLKDQQL) is immunosuppression. A disulfide bridge links Cys-584 with Cys-590. Asn-597, Asn-602, Asn-611, and Asn-623 each carry an N-linked (GlcNAc...) asparagine; by host glycan. A coiled-coil region spans residues 619–653 (REIHNYTQHIYSLIEESQNQQEKNEQDLLALDKWA). The interval 648–669 (ALDKWASLWNWFDISNWLWYIR) is MPER; binding to GalCer. The helical transmembrane segment at 671–691 (FIMIVGGLIGLRIVFAVLSIV) threads the bilayer. Residues 692 to 849 (NRVRQGYSPL…IRQGLERALL (158 aa)) lie on the Cytoplasmic side of the membrane. A YXXL motif; contains endocytosis signal motif is present at residues 698-701 (YSPL). Positions 709 to 729 (HQREPDRLGKTEEGGGEQDRD) are disordered. Residue Cys-750 is the site of S-palmitoyl cysteine; by host attachment. The Di-leucine internalization motif motif lies at 848–849 (LL).

This sequence belongs to the HIV-1 env protein family. The mature envelope protein (Env) consists of a homotrimer of non-covalently associated gp120-gp41 heterodimers. The resulting complex protrudes from the virus surface as a spike. There seems to be as few as 10 spikes on the average virion. Interacts with host CD4, CCR5 and CXCR4. Gp120 also interacts with the C-type lectins CD209/DC-SIGN and CLEC4M/DC-SIGNR (collectively referred to as DC-SIGN(R)). Gp120 and gp41 interact with GalCer. Gp120 interacts with host ITGA4/ITGB7 complex; on CD4+ T-cells, this interaction results in rapid activation of integrin ITGAL/LFA-1, which facilitates efficient cell-to-cell spreading of HIV-1. Gp120 interacts with cell-associated heparan sulfate; this interaction increases virus infectivity on permissive cells and may be involved in infection of CD4- cells. As to quaternary structure, the mature envelope protein (Env) consists of a homotrimer of non-covalently associated gp120-gp41 heterodimers. The resulting complex protrudes from the virus surface as a spike. There seems to be as few as 10 spikes on the average virion. In terms of processing, highly glycosylated by host. The high number of glycan on the protein is reffered to as 'glycan shield' because it contributes to hide protein sequence from adaptive immune system. Post-translationally, palmitoylation of the transmembrane protein and of Env polyprotein (prior to its proteolytic cleavage) is essential for their association with host cell membrane lipid rafts. Palmitoylation is therefore required for envelope trafficking to classical lipid rafts, but not for viral replication. Specific enzymatic cleavages in vivo yield mature proteins. Envelope glycoproteins are synthesized as an inactive precursor that is heavily N-glycosylated and processed likely by host cell furin in the Golgi to yield the mature SU and TM proteins. The cleavage site between SU and TM requires the minimal sequence [KR]-X-[KR]-R. About 2 of the 9 disulfide bonds of gp41 are reduced by P4HB/PDI, following binding to CD4 receptor.

Its subcellular location is the virion membrane. The protein resides in the host cell membrane. It localises to the host endosome membrane. Its function is as follows. Oligomerizes in the host endoplasmic reticulum into predominantly trimers. In a second time, gp160 transits in the host Golgi, where glycosylation is completed. The precursor is then proteolytically cleaved in the trans-Golgi and thereby activated by cellular furin or furin-like proteases to produce gp120 and gp41. Attaches the virus to the host lymphoid cell by binding to the primary receptor CD4. This interaction induces a structural rearrangement creating a high affinity binding site for a chemokine coreceptor like CXCR4 and/or CCR5. Acts as a ligand for CD209/DC-SIGN and CLEC4M/DC-SIGNR, which are respectively found on dendritic cells (DCs), and on endothelial cells of liver sinusoids and lymph node sinuses. These interactions allow capture of viral particles at mucosal surfaces by these cells and subsequent transmission to permissive cells. HIV subverts the migration properties of dendritic cells to gain access to CD4+ T-cells in lymph nodes. Virus transmission to permissive T-cells occurs either in trans (without DCs infection, through viral capture and transmission), or in cis (following DCs productive infection, through the usual CD4-gp120 interaction), thereby inducing a robust infection. In trans infection, bound virions remain infectious over days and it is proposed that they are not degraded, but protected in non-lysosomal acidic organelles within the DCs close to the cell membrane thus contributing to the viral infectious potential during DCs' migration from the periphery to the lymphoid tissues. On arrival at lymphoid tissues, intact virions recycle back to DCs' cell surface allowing virus transmission to CD4+ T-cells. In terms of biological role, acts as a class I viral fusion protein. Under the current model, the protein has at least 3 conformational states: pre-fusion native state, pre-hairpin intermediate state, and post-fusion hairpin state. During fusion of viral and target intracellular membranes, the coiled coil regions (heptad repeats) assume a trimer-of-hairpins structure, positioning the fusion peptide in close proximity to the C-terminal region of the ectodomain. The formation of this structure appears to drive apposition and subsequent fusion of viral and target cell membranes. Complete fusion occurs in host cell endosomes and is dynamin-dependent, however some lipid transfer might occur at the plasma membrane. The virus undergoes clathrin-dependent internalization long before endosomal fusion, thus minimizing the surface exposure of conserved viral epitopes during fusion and reducing the efficacy of inhibitors targeting these epitopes. Membranes fusion leads to delivery of the nucleocapsid into the cytoplasm. This chain is Envelope glycoprotein gp160, found in Human immunodeficiency virus type 1 group M subtype G (isolate 92NG083) (HIV-1).